Consider the following 371-residue polypeptide: Geranylgeranyl pyrophosphate synthase paxG (371 aa).

Isopentenyl diphosphate is bound by residues K89, R92, and H121. 2 residues coordinate Mg(2+): D128 and D132. Dimethylallyl diphosphate is bound at residue R137. Residue R138 participates in isopentenyl diphosphate binding. 3 residues coordinate dimethylallyl diphosphate: K215, T216, and Q249. Position 252 (D252) interacts with Mg(2+). Residues N256, K266, and K276 each contribute to the dimethylallyl diphosphate site. A Peroxisomal targeting signal motif is present at residues 369 to 371 (GRV).

This sequence belongs to the FPP/GGPP synthase family. Requires Mg(2+) as cofactor.

It is found in the peroxisome. It carries out the reaction isopentenyl diphosphate + dimethylallyl diphosphate = (2E)-geranyl diphosphate + diphosphate. It catalyses the reaction isopentenyl diphosphate + (2E)-geranyl diphosphate = (2E,6E)-farnesyl diphosphate + diphosphate. The enzyme catalyses isopentenyl diphosphate + (2E,6E)-farnesyl diphosphate = (2E,6E,10E)-geranylgeranyl diphosphate + diphosphate. Its pathway is secondary metabolite biosynthesis. In terms of biological role, geranylgeranyl pyrophosphate synthase; part of the gene cluster that mediates the biosynthesis of paxilline, a mycotoxin that acts as an inhibitor of mammalian maxi-K channels. PaxG, the geranylgeranyl diphosphate (GGPP) synthase is proposed to catalyze the first step in paxilline biosynthesis. Condensation of indole-3-glycerol phosphate with GGPP by paxC then forms 3-geranylgeranylindole (3-GGI), followed by epoxidation and cyclization of this intermediate (by paxM and paxB) to form paspaline. Paspaline is subsequently converted to 13-desoxypaxilline by paxP, the latter being then converted to paxilline by paxQ. Finally paxilline can be mono- and di-prenylated by paxD. In Penicillium paxilli, this protein is Geranylgeranyl pyrophosphate synthase paxG.